The primary structure comprises 673 residues: Pesticin receptor (673 aa).

The signal sequence occupies residues 1-22 (MKMTRLYPLALGGLLLPAIANA). The TonB box signature appears at 30-37 (STLEVTAS). The TBDR plug domain occupies 41 to 155 (SRSASANNVS…QGGIINIVTQ (115 aa)). A TBDR beta-barrel domain is found at 160 to 672 (TPRGYIEGGV…TVGINTRIDF (513 aa)). The short motif at 657-673 (QVNMGRTVGINTRIDFF) is the TonB C-terminal box element.

The protein belongs to the TonB-dependent receptor family.

Its subcellular location is the cell outer membrane. Functionally, receptor for the bacteriocin pesticin and for the siderophore yersiniabactin. This Yersinia enterocolitica serotype O:8 / biotype 1B (strain NCTC 13174 / 8081) protein is Pesticin receptor (fyuA).